Consider the following 377-residue polypeptide: MTDDESESVLSDSHEGSELELPVIQLCGLVEELSYVNSALKTETEMFEKYYAKLEPRDQRPPRLSEIKISAADYAQFRGRRRSKSRTGMDRGVGLTADQKLELVQKEVADMKDDLRHTRANAERDLQHHEAIIEEAEIRWSEVSREVHEFEKDILKAISKKKGSILATQKVMKYIEDMNRRRDNMKEKLRLKNVSLKVQRKKMLLQLRQKEEVSEALHDVDFQQLKIENAQFLETIEARNQELTQLKLSSGNTLQVLNAYKSKLHKAMEIYLNLDKEILLRKELLEKIEKETLQVEEDRAKAEAVNKRLRKQLAEFRAPQVMTYVREKILNADLEKSIRMWERKVEIAEMSLKGHRKAWNRMKITNEQLQADYLAGK.

Coiled coils occupy residues 95–243 (LTAD…NQEL) and 280–354 (LRKE…SLKG).

The protein belongs to the CFAP263 family. In terms of assembly, forms a complex with CFAP184; the interaction is required for functional activity in cilia. Interacts with HAP1 and PCM1.

The protein localises to the cytoplasm. Its subcellular location is the cytoskeleton. It is found in the microtubule organizing center. The protein resides in the centrosome. It localises to the centriolar satellite. The protein localises to the cell projection. Its subcellular location is the cilium. Component of centriolar satellites contributing to primary cilium formation. In complex with CFAP263, acts as a regulator of ciliary beating that connects radial spoke 3 (RS3) to the inner dynein arm (IDA) and the nexin-dynein regulatory complex (N-DRC). The complex is positioned parallel to N-DRC and forms a connection between the arch at the base of RS3, the IDA tail and N-DRC. This chain is Cilia- and flagella-associated protein 263, found in Homo sapiens (Human).